We begin with the raw amino-acid sequence, 237 residues long: MTILPAIDLKDGKAVRLSKGLMESAKIYSDEPWQVAKRFEELGSEWVHLVDLNGAFAGKPENLEQIKKIRENCNLKLELGGGIRDEETIKMYLDLGIDRLILGSIAVKDPKFVREMAAKYPIVVGIDAIDGMVAVEGWGEVSDMKATDLAKEFADAGVEAIICTDVGRDGMMTGVNIDFTLAIKEASGLETIASGGLKDMTDINALIEAGIDGTIVGKAFYEGTLDLEEAFRTVNAG.

Asp8 functions as the Proton acceptor in the catalytic mechanism. Asp127 serves as the catalytic Proton donor.

The protein belongs to the HisA/HisF family.

It localises to the cytoplasm. It catalyses the reaction 1-(5-phospho-beta-D-ribosyl)-5-[(5-phospho-beta-D-ribosylamino)methylideneamino]imidazole-4-carboxamide = 5-[(5-phospho-1-deoxy-D-ribulos-1-ylimino)methylamino]-1-(5-phospho-beta-D-ribosyl)imidazole-4-carboxamide. The protein operates within amino-acid biosynthesis; L-histidine biosynthesis; L-histidine from 5-phospho-alpha-D-ribose 1-diphosphate: step 4/9. The sequence is that of 1-(5-phosphoribosyl)-5-[(5-phosphoribosylamino)methylideneamino] imidazole-4-carboxamide isomerase from Sulfurovum sp. (strain NBC37-1).